A 420-amino-acid polypeptide reads, in one-letter code: Adenylosuccinate synthetase (420 aa).

Residues 11-17 and 39-41 contribute to the GTP site; these read GDEGKGK and GHT. Catalysis depends on Asp12, which acts as the Proton acceptor. Mg(2+)-binding residues include Asp12 and Gly39. Residues 12 to 15, 37 to 40, Thr129, Arg143, Asn218, Thr233, and Arg297 each bind IMP; these read DEGK and NAGH. His40 acts as the Proton donor in catalysis. 293-299 lines the substrate pocket; it reads VTTGRKR. GTP contacts are provided by residues Arg299, 325–327, and 407–409; these read KLD and GTG.

It belongs to the adenylosuccinate synthetase family. Homodimer. Requires Mg(2+) as cofactor.

It is found in the cytoplasm. The catalysed reaction is IMP + L-aspartate + GTP = N(6)-(1,2-dicarboxyethyl)-AMP + GDP + phosphate + 2 H(+). It functions in the pathway purine metabolism; AMP biosynthesis via de novo pathway; AMP from IMP: step 1/2. Functionally, plays an important role in the de novo pathway and in the salvage pathway of purine nucleotide biosynthesis. Catalyzes the first committed step in the biosynthesis of AMP from IMP. This chain is Adenylosuccinate synthetase, found in Uncinocarpus reesii (strain UAMH 1704).